The chain runs to 911 residues: Protein SOSEKI (911 aa).

Residues 15 to 107 (TKVQVVYYLS…LVLKGSELYT (93 aa)) form a DIX-like oligomerization domain region. 2 disordered regions span residues 219–470 (SETL…TQCE) and 492–810 (LCGN…PPRI). 2 stretches are compositionally biased toward basic and acidic residues: residues 253–286 (TDRE…EVSR) and 295–407 (EAPR…EELP). Positions 414 to 423 (SPTCSESGDS) are enriched in polar residues. The segment covering 452–467 (SSSTRSSTPSTSAAST) has biased composition (low complexity). The Association to cell membranes signature appears at 493 to 494 (CG). Over residues 511 to 527 (PLAAAAQPASGAVPQSP) the composition is skewed to low complexity. Residues 591 to 607 (SGVNSAMATPFLQTENN) are compositionally biased toward polar residues. Over residues 608-662 (SPSSSESSSAAVSSGKKPASISLSGTSDASDGGNGASSTASSSSEVQNNVSVKEV) the composition is skewed to low complexity. Positions 663-683 (ITQQLPSPSSSEGRPSLNIDT) are enriched in polar residues. Residues 696-709 (SDVRETVKTTRPDS) show a composition bias toward basic and acidic residues. Residues 722–733 (PVRTQLSSSPSF) are compositionally biased toward polar residues. Basic and acidic residues predominate over residues 735 to 771 (KRIEDARARARSLVSKEIRSGESRSSKDLLKENDRVK). Positions 772–784 (TSSGSMRSGSTRT) are enriched in low complexity. The segment covering 785–805 (PNNKNGTTGAGSKTLSGTFNR) has biased composition (polar residues). Residues 864–893 (ILQECGQCGRTFKPDSLKVHMRGCHALRRS) form a C2HC/C3H-type zinc finger. Zn(2+) is bound by residues cysteine 868, cysteine 871, histidine 883, and cysteine 887.

It belongs to the SOSEKI family. In terms of assembly, homodimer. Forms long polymer filaments with other SOKs proteins polymers crucial for polar localization and biological activity. Zn(2+) serves as cofactor.

It localises to the cell membrane. Its function is as follows. SOSEKI proteins locally interpret global polarity cues and can influence cell division orientation to coordinate cell polarization relative to body axes. This Marchantia polymorpha (Common liverwort) protein is Protein SOSEKI.